Here is a 552-residue protein sequence, read N- to C-terminus: Oxygen-dependent choline dehydrogenase (552 aa).

7–36 (DYIIIGAGSAGNVLAARLTEDKDTTVLLLE) serves as a coordination point for FAD. H477 (proton acceptor) is an active-site residue.

The protein belongs to the GMC oxidoreductase family. It depends on FAD as a cofactor.

The catalysed reaction is choline + A = betaine aldehyde + AH2. The enzyme catalyses betaine aldehyde + NAD(+) + H2O = glycine betaine + NADH + 2 H(+). It participates in amine and polyamine biosynthesis; betaine biosynthesis via choline pathway; betaine aldehyde from choline (cytochrome c reductase route): step 1/1. Functionally, involved in the biosynthesis of the osmoprotectant glycine betaine. Catalyzes the oxidation of choline to betaine aldehyde and betaine aldehyde to glycine betaine at the same rate. In Acinetobacter baumannii (strain AB307-0294), this protein is Oxygen-dependent choline dehydrogenase.